A 600-amino-acid polypeptide reads, in one-letter code: Fructan 1-exohydrolase (600 aa).

The N-terminal stretch at 1–27 (MAQAWAFLLPVLFFGSYVTNLFLPTYA) is a signal peptide. The active site involves aspartate 73. Residues asparagine 166, asparagine 234, and asparagine 246 are each glycosylated (N-linked (GlcNAc...) asparagine). A disulfide bridge links cysteine 444 with cysteine 490. N-linked (GlcNAc...) asparagine glycosylation is present at asparagine 565.

It belongs to the glycosyl hydrolase 32 family.

It carries out the reaction Hydrolysis of terminal, non-reducing (2-&gt;1)-linked beta-D-fructofuranose residues in fructans.. With respect to regulation, inhibited by sucrose. Functionally, hydrolyzes inulin-type beta-(2,1)-fructans. May play a role as a beta-(2,1)-trimmer during graminan biosynthesis. This chain is Fructan 1-exohydrolase, found in Leymus chinensis (Chinese lyme grass).